Consider the following 695-residue polypeptide: Transketolase (695 aa).

Position 37 (histidine 37) interacts with substrate. Thiamine diphosphate contacts are provided by residues histidine 77 and glycine 126–leucine 128. Residue aspartate 164 participates in Mg(2+) binding. Residues glycine 165 and asparagine 194 each coordinate thiamine diphosphate. Mg(2+) contacts are provided by asparagine 194 and isoleucine 196. Residues histidine 268, arginine 361, and serine 388 each coordinate substrate. Histidine 268 provides a ligand contact to thiamine diphosphate. The Proton donor role is filled by glutamate 415. A thiamine diphosphate-binding site is contributed by phenylalanine 441. Substrate is bound by residues histidine 465, aspartate 473, and arginine 524.

This sequence belongs to the transketolase family. As to quaternary structure, homodimer. It depends on Mg(2+) as a cofactor. Ca(2+) serves as cofactor. Mn(2+) is required as a cofactor. Requires Co(2+) as cofactor. The cofactor is thiamine diphosphate.

The catalysed reaction is D-sedoheptulose 7-phosphate + D-glyceraldehyde 3-phosphate = aldehydo-D-ribose 5-phosphate + D-xylulose 5-phosphate. Its pathway is carbohydrate biosynthesis; Calvin cycle. Catalyzes the transfer of a two-carbon ketol group from a ketose donor to an aldose acceptor, via a covalent intermediate with the cofactor thiamine pyrophosphate. The sequence is that of Transketolase (cbbT) from Sinorhizobium medicae (strain WSM419) (Ensifer medicae).